Here is a 151-residue protein sequence, read N- to C-terminus: Group 10 secretory phospholipase A2 (151 aa).

The N-terminal stretch at methionine 1–serine 17 is a signal peptide. Positions glutamate 18–arginine 28 are excised as a propeptide. 8 disulfides stabilise this stretch: cysteine 39–cysteine 97, cysteine 53–cysteine 143, cysteine 55–cysteine 71, cysteine 70–cysteine 125, cysteine 76–cysteine 150, cysteine 77–cysteine 118, cysteine 86–cysteine 111, and cysteine 104–cysteine 116. Residues tyrosine 54, glycine 56, and glycine 58 each coordinate Ca(2+). The active site involves histidine 74. Aspartate 75 serves as a coordination point for Ca(2+). Aspartate 119 is a catalytic residue.

It belongs to the phospholipase A2 family. Interacts with PLA2R1; this interaction mediates PLA2G10 clearance and inactivation. Ca(2+) serves as cofactor. Expressed at high levels in testis and the gastrointestinal tract including stomach and colon. Expressed at lower levels in other tissues including small intestine, uterus, oviduct, lung, thymus, spleen and brain. Expressed in Paneth-like secretory epithelial cells of the colon. Expressed in gastric and ileac epithelial cells and in glandular epithelium of intestinal mucosa (at protein level). Expressed in late spermatogenic cells, spermatocytes and spermatids, but not spermatogonia in seminiferous tubules (at protein level). Expressed mainly in the apical side of endometrial epithelial cells and in the interstitium beneath the epithelium of uterus (at protein level). Expressed in resident spleen macrophages (at protein level). Expressed at outermost layer of hair follicles. Expressed in dorsal root ganglia in both NEFH-positive A-fibers and PRPH-positive C-fibers (at protein level).

Its subcellular location is the secreted. The protein localises to the lysosome. The protein resides in the cytoplasmic vesicle. It is found in the secretory vesicle. It localises to the acrosome. The enzyme catalyses a 1,2-diacyl-sn-glycero-3-phosphocholine + H2O = a 1-acyl-sn-glycero-3-phosphocholine + a fatty acid + H(+). It carries out the reaction 1-hexadecanoyl-2-(9Z-octadecenoyl)-sn-glycero-3-phosphocholine + H2O = 1-hexadecanoyl-sn-glycero-3-phosphocholine + (9Z)-octadecenoate + H(+). It catalyses the reaction 1-octadecanoyl-2-(5Z,8Z,11Z,14Z-eicosatetraenoyl)-sn-glycero-3-phosphocholine + H2O = 1-octadecanoyl-sn-glycero-3-phosphocholine + (5Z,8Z,11Z,14Z)-eicosatetraenoate + H(+). The catalysed reaction is 1,2-dihexadecanoyl-sn-glycero-3-phosphocholine + H2O = 1-hexadecanoyl-sn-glycero-3-phosphocholine + hexadecanoate + H(+). The enzyme catalyses 1-hexadecanoyl-2-(9Z-octadecenoyl)-sn-glycero-3-phosphoglycerol + H2O = 1-hexadecanoyl-sn-glycero-3-phosphoglycerol + (9Z)-octadecenoate + H(+). It carries out the reaction 1,2-dihexadecanoyl-sn-glycero-3-phospho-(1'-sn-glycerol) + H2O = 1-hexadecanoyl-sn-glycero-3-phospho-(1'-sn-glycerol) + hexadecanoate + H(+). It catalyses the reaction 1-hexadecanoyl-2-(9Z-octadecenoyl)-sn-glycero-3-phospho-L-serine + H2O = 1-hexadecanoyl-sn-glycero-3-phospho-L-serine + (9Z)-octadecenoate + H(+). The catalysed reaction is 1-hexadecanoyl-2-(9Z,12Z-octadecadienoyl)-sn-glycero-3-phosphoethanolamine + H2O = 1-hexadecanoyl-sn-glycero-3-phosphoethanolamine + (9Z,12Z)-octadecadienoate + H(+). The enzyme catalyses 1-hexadecanoyl-2-(9Z-octadecenoyl)-sn-glycero-3-phosphate + H2O = 1-hexadecanoyl-sn-glycero-3-phosphate + (9Z)-octadecenoate + H(+). It carries out the reaction 1-O-hexadecyl-2-acetyl-sn-glycero-3-phosphocholine + H2O = 1-O-hexadecyl-sn-glycero-3-phosphocholine + acetate + H(+). Functionally, secretory calcium-dependent phospholipase A2 that primarily targets extracellular phospholipids. Hydrolyzes the ester bond of the fatty acyl group attached at sn-2 position of phospholipids with preference for phosphatidylcholines and phosphatidylglycerols over phosphatidylethanolamines. Preferentially releases sn-2 omega-6 and omega-3 polyunsaturated fatty acyl (PUFA) chains over saturated fatty acyls. Contributes to phospholipid remodeling of very low-density lipoprotein (VLDL), low-density lipoprotein (LDL) and high-density lipoprotein (HDL) particles. Hydrolyzes LDL phospholipids releasing unsaturated fatty acids that regulate macrophage differentiation toward foam cells. Efficiently hydrolyzes and inactivates PAF, a potent lipid mediator present in oxidized LDL. May act in an autocrine and paracrine manner. Secreted by lung epithelium, targets membrane phospholipids of infiltrating eosinophils, releasing arachidonate and boosting eicosanoid and cysteinyl leukotriene synthesis involved in airway inflammatory response. Secreted by gut epithelium, hydrolyzes dietary and biliary phosphatidylcholines in the gastrointestinal lumen, thereby regulating adipogenesis and body weight. Plays a stem cell regulator role in colon epithelium. Within intracellular compartment, mediates Paneth-like cell differentiation and its stem cell supporting functions by inhibiting Wnt signaling pathway in intestinal stem cell (ISC). Secreted in the intestinal lumen upon inflammation, acts in an autocrine way and promotes prostaglandin E2 synthesis that stimulates the Wnt signaling pathway in ISCs and tissue regeneration. May participate in hair follicle morphogenesis by regulating phosphatidylethanolamines metabolism at the outermost epithelial layer and facilitating melanin synthesis. By generating lysophosphatidylcholines (LPCs) at sperm acrosome controls sperm cell capacitation, acrosome reaction and overall fertility. May promote neurite outgrowth in neuron fibers involved in nociception. Contributes to lipid remodeling of cellular membranes and generation of lipid mediators involved in pathogen clearance. Cleaves sn-2 fatty acyl chains of phosphatidylglycerols and phosphatidylethanolamines, which are major components of membrane phospholipids in bacteria. Displays bactericidal activity against Gram-positive bacteria by directly hydrolyzing phospholipids of the bacterial membrane. In pulmonary epithelium, may contribute to host defense response against adenoviral infection. Prevents adenovirus entry into host cells by hydrolyzing host cell plasma membrane, releasing C16:0 LPCs that inhibit virus-mediated membrane fusion and viral infection. Likely prevents adenoviral entry into the endosomes of host cells. May play a role in maturation and activation of innate immune cells including macrophages, group 2 innate lymphoid cells and mast cells. This is Group 10 secretory phospholipase A2 (Pla2g10) from Mus musculus (Mouse).